Consider the following 379-residue polypeptide: Probable leucine aminopeptidase TRV_05286 (379 aa).

A signal peptide spans 1–18 (MKIATLAVVSAFAATAIA). Zn(2+) is bound by residues His182 and Asp201. 2 N-linked (GlcNAc...) asparagine glycosylation sites follow: Asn202 and Asn226. Zn(2+) is bound by residues Glu240 and Asp267. Cys312 and Cys316 form a disulfide bridge. A Zn(2+)-binding site is contributed by His345.

It belongs to the peptidase M28 family. M28E subfamily. Monomer. It depends on Zn(2+) as a cofactor.

The protein resides in the secreted. Functionally, probable extracellular aminopeptidase which contributes to pathogenicity. In Trichophyton verrucosum (strain HKI 0517), this protein is Probable leucine aminopeptidase TRV_05286.